Consider the following 303-residue polypeptide: 1-acyl-sn-glycerol-3-phosphate acyltransferase (303 aa).

Residues 82-87 carry the HXXXXD motif motif; it reads HQSTLD. Residues 278–303 form a disordered region; it reads NEPVPSVSISNDVNTHNEGSSVKKMH. Positions 284 to 297 are enriched in polar residues; it reads VSISNDVNTHNEGS.

This sequence belongs to the 1-acyl-sn-glycerol-3-phosphate acyltransferase family.

The protein localises to the lipid droplet. The catalysed reaction is a 1-acyl-sn-glycero-3-phosphate + an acyl-CoA = a 1,2-diacyl-sn-glycero-3-phosphate + CoA. It carries out the reaction a 1-acyl-sn-glycero-3-phosphocholine + an acyl-CoA = a 1,2-diacyl-sn-glycero-3-phosphocholine + CoA. It catalyses the reaction a 1-acyl-sn-glycero-3-phosphoethanolamine + an acyl-CoA = a 1,2-diacyl-sn-glycero-3-phosphoethanolamine + CoA. The enzyme catalyses 1-hexadecanoyl-sn-glycero-3-phosphate + (9Z)-octadecenoyl-CoA = 1-hexadecanoyl-2-(9Z-octadecenoyl)-sn-glycero-3-phosphate + CoA. The catalysed reaction is 1-octadecanoyl-sn-glycero-3-phosphate + (9Z)-octadecenoyl-CoA = 1-octadecanoyl-2-(9Z-octadecenoyl)-sn-glycero-3-phosphate + CoA. It carries out the reaction 1-(9Z-octadecenoyl)-sn-glycero-3-phospho-L-serine + (9Z)-octadecenoyl-CoA = 1,2-di-(9Z)-octadecenoyl-sn-glycero-3-phospho-L-serine + CoA. It catalyses the reaction a 1-acyl-sn-glycero-3-phospho-(1D-myo-inositol) + (9Z)-octadecenoyl-CoA = a 1-acyl-2-(9Z-octadecenoyl)-sn-glycero-3-phospho-(1D-myo-inositol) + CoA. The enzyme catalyses 1-heptadecanoyl-sn-glycero-3-phosphate + (9Z)-octadecenoyl-CoA = 1-heptadecanoyl-2-(9Z)-octadecenoyl-sn-glycero-3-phosphate + CoA. The catalysed reaction is 1-heptadecanoyl-sn-glycero-3-phosphate + dodecanoyl-CoA = 1-heptadecanoyl-2-dodecanoyl-sn-glycero-3-phosphate + CoA. It carries out the reaction 1-heptadecanoyl-sn-glycero-3-phosphate + tetradecanoyl-CoA = 1-heptadecanoyl-2-tetradecanoyl-sn-glycero-3-phosphate + CoA. It functions in the pathway phospholipid metabolism; CDP-diacylglycerol biosynthesis; CDP-diacylglycerol from sn-glycerol 3-phosphate: step 2/3. In terms of biological role, acyltransferase that catalyzes the sn-2-specific, acyl-CoA-dependent acylation of lysophosphatidic acid (LPA) to phosphatidic acid (PA) in lipid particles. Together with ALE1, plays a central role in PA biosynthesis. PA is the intermediate, from which all glycerophospholipids are synthesized. Can also acylate lysophosphoinositol (LPI) and lysophosphoserine (LPS). The fatty acyl substrates include 18:1-acyl-CoA, 14:0-acyl-CoA, 12:0-acyl-CoA and 10:0-acyl-CoA. The sequence is that of 1-acyl-sn-glycerol-3-phosphate acyltransferase from Saccharomyces cerevisiae (strain ATCC 204508 / S288c) (Baker's yeast).